We begin with the raw amino-acid sequence, 269 residues long: Hydroxyethylthiazole kinase (269 aa).

M45 provides a ligand contact to substrate. Residues R121 and T167 each contribute to the ATP site. Residue G194 participates in substrate binding.

Belongs to the Thz kinase family. It depends on Mg(2+) as a cofactor.

It catalyses the reaction 5-(2-hydroxyethyl)-4-methylthiazole + ATP = 4-methyl-5-(2-phosphooxyethyl)-thiazole + ADP + H(+). The protein operates within cofactor biosynthesis; thiamine diphosphate biosynthesis; 4-methyl-5-(2-phosphoethyl)-thiazole from 5-(2-hydroxyethyl)-4-methylthiazole: step 1/1. Its function is as follows. Catalyzes the phosphorylation of the hydroxyl group of 4-methyl-5-beta-hydroxyethylthiazole (THZ). The protein is Hydroxyethylthiazole kinase of Bacillus mycoides (strain KBAB4) (Bacillus weihenstephanensis).